The sequence spans 208 residues: Orotidine 5'-phosphate decarboxylase (208 aa).

Residues D7, K29, 57–66, S109, 162–172, G185, and R186 contribute to the substrate site; these read DLKLADIPNT and PGIGAQGGKAK. Residue K59 is the Proton donor of the active site.

Belongs to the OMP decarboxylase family. Type 1 subfamily. In terms of assembly, homodimer.

The enzyme catalyses orotidine 5'-phosphate + H(+) = UMP + CO2. It participates in pyrimidine metabolism; UMP biosynthesis via de novo pathway; UMP from orotate: step 2/2. Catalyzes the decarboxylation of orotidine 5'-monophosphate (OMP) to uridine 5'-monophosphate (UMP). This is Orotidine 5'-phosphate decarboxylase from Pyrococcus abyssi (strain GE5 / Orsay).